Consider the following 116-residue polypeptide: Large ribosomal subunit protein bL20 (116 aa).

It belongs to the bacterial ribosomal protein bL20 family.

Functionally, binds directly to 23S ribosomal RNA and is necessary for the in vitro assembly process of the 50S ribosomal subunit. It is not involved in the protein synthesizing functions of that subunit. The polypeptide is Large ribosomal subunit protein bL20 (Desulfatibacillum aliphaticivorans).